The following is a 110-amino-acid chain: Coiled-coil-helix-coiled-coil-helix domain-containing protein 5 (110 aa).

At Met-1 the chain carries N-acetylmethionine. 2 consecutive CHCH domains span residues 9-52 (ARYC…PIIR) and 55-97 (RQAC…QPPR). 4 consecutive short sequence motifs (cx9C motif) follow at residues 12-22 (CGRELEQYGQC), 34-44 (CHYLKMSIAQC), 58-68 (CAQPFEAFEEC), and 79-89 (CAEHMRRFLQC). Cystine bridges form between Cys-12/Cys-44, Cys-22/Cys-34, Cys-58/Cys-89, and Cys-68/Cys-79.

In terms of assembly, monomer.

Its subcellular location is the mitochondrion intermembrane space. The chain is Coiled-coil-helix-coiled-coil-helix domain-containing protein 5 (CHCHD5) from Homo sapiens (Human).